We begin with the raw amino-acid sequence, 352 residues long: Chymopapain (352 aa).

The first 18 residues, 1–18 (MATMSSISKIIFLATCLI), serve as a signal peptide directing secretion. A propeptide spans 19 to 134 (IHMGLSSADF…EDFTYKHVTN (116 aa)) (activation peptide). Asn-86 is a glycosylation site (N-linked (GlcNAc...) asparagine). Cystine bridges form between Cys-156–Cys-197, Cys-190–Cys-229, and Cys-287–Cys-338. Cys-159 is a catalytic residue. Active-site residues include His-293 and Asn-313.

It belongs to the peptidase C1 family.

The enzyme catalyses Specificity similar to that of papain.. In terms of biological role, cysteine proteinase with a high level of diversity in substrate specificity. The protein is Chymopapain of Carica papaya (Papaya).